We begin with the raw amino-acid sequence, 2103 residues long: Orsellinic acid synthase (2103 aa).

Positions 17 to 232 (DAVHDLNVRS…KRPELAHATI (216 aa)) are N-terminal acylcarrier protein transacylase domain (SAT). A Ketosynthase family 3 (KS3) domain is found at 348-782 (ADAIAVVGMS…GGNVSMLLQD (435 aa)). Active-site for beta-ketoacyl synthase activity residues include Cys-525, His-660, and His-702. The tract at residues 881-1197 (VFTFTGQGAQ…RRGGDDWQSV (317 aa)) is malonyl-CoA:ACP transacylase (MAT) domain. The active-site For acyl/malonyl transferase activity is Ser-973. The tract at residues 1272–1409 (HAVEKLQREE…GQPDSAVRRD (138 aa)) is N-terminal hotdog fold. Residues 1272-1582 (HAVEKLQREE…FKKLERDFFA (311 aa)) enclose the PKS/mFAS DH domain. Residues 1303 to 1579 (GHVVDESAIC…DICFKKLERD (277 aa)) form a product template (PT) domain region. The active-site Proton acceptor; for dehydratase activity is His-1304. The tract at residues 1433–1582 (VHAMDTALFY…FKKLERDFFA (150 aa)) is C-terminal hotdog fold. The active-site Proton donor; for dehydratase activity is Asp-1493. The tract at residues 1592 to 1638 (STKPVAAAPAKSMAKRARQLAPSPSPSSSSGSNTPMSRSPTPSSVSD) is disordered. Composition is skewed to low complexity over residues 1594 to 1603 (KPVAAAPAKS) and 1617 to 1631 (PSSSSGSNTPMSRSP). Carrier domains lie at 1640–1716 (VDLG…GGSA) and 1741–1815 (PAPS…DDDA). An O-(pantetheine 4'-phosphoryl)serine modification is found at Ser-1676. The interval 1722–1743 (EDITKPTPSPEQTQARKQGPAP) is disordered. O-(pantetheine 4'-phosphoryl)serine is present on Ser-1775. Residues 1809–1838 (EALDDDAEEESAPAQTSTNPAKETTIDSSR) are disordered. The span at 1810-1819 (ALDDDAEEES) shows a compositional bias: acidic residues. A compositionally biased stretch (polar residues) spans 1823–1836 (QTSTNPAKETTIDS). Residues 1849–2082 (ASYIHLKALP…TVNGDHFSMM (234 aa)) form a thioesterase (TE) domain region.

It catalyses the reaction 3 malonyl-CoA + acetyl-CoA + 2 H(+) = orsellinate + 3 CO2 + 4 CoA. It functions in the pathway secondary metabolite biosynthesis. Functionally, non-reducing polyketide synthase; part of the gene cluster that mediates the biosynthesis of orsellinic acid, as well as of the cathepsin K inhibitors F9775 A and F9775 B. The non-reducing polyketide synthase orsA produces orsellinic acid by condensing acetyl-CoA with 3 malonyl-CoA units. Further modifications by the decarboxylase orsB and the tyrosinase-like protein orsC lead to the production of F9775 A and F9775 B. The functions of orsD and orsE remain unclear since only orsB and orsC are required to convert orsellinic acid into F9775 A and F9775 B. The sequence is that of Orsellinic acid synthase from Emericella nidulans (strain FGSC A4 / ATCC 38163 / CBS 112.46 / NRRL 194 / M139) (Aspergillus nidulans).